The chain runs to 326 residues: Peroxidase 1 (326 aa).

The first 22 residues, 1–22 (MASSRVILALLLAAAAVMASSA), serve as a signal peptide directing secretion. At glutamine 23 the chain carries Pyrrolidone carboxylic acid. 4 disulfides stabilise this stretch: cysteine 33–cysteine 112, cysteine 66–cysteine 71, cysteine 118–cysteine 322, and cysteine 196–cysteine 231. The Proton acceptor role is filled by histidine 64. Positions 65, 68, 70, 72, and 74 each coordinate Ca(2+). N-linked (GlcNAc...) asparagine glycosylation is found at asparagine 82 and asparagine 153. Proline 159 serves as a coordination point for substrate. The N-linked (GlcNAc...) asparagine glycan is linked to asparagine 164. Residue histidine 189 participates in heme b binding. A Ca(2+)-binding site is contributed by threonine 190. N-linked (GlcNAc...) asparagine glycans are attached at residues asparagine 205 and asparagine 237. 3 residues coordinate Ca(2+): aspartate 244, serine 247, and aspartate 252.

Belongs to the peroxidase family. Classical plant (class III) peroxidase subfamily. The cofactor is Ca(2+). It depends on heme b as a cofactor.

Its subcellular location is the secreted. The catalysed reaction is 2 a phenolic donor + H2O2 = 2 a phenolic radical donor + 2 H2O. Functionally, removal of H(2)O(2), oxidation of toxic reductants, biosynthesis and degradation of lignin, suberization, auxin catabolism, response to environmental stresses such as wounding, pathogen attack and oxidative stress. These functions might be dependent on each isozyme/isoform in each plant tissue. The chain is Peroxidase 1 (PRX74) from Oryza sativa subsp. japonica (Rice).